The primary structure comprises 432 residues: Adenylosuccinate synthetase (432 aa).

GTP contacts are provided by residues G13–K19 and G41–T43. D14 functions as the Proton acceptor in the catalytic mechanism. D14 and G41 together coordinate Mg(2+). Residues D14–K17, N39–H42, T130, R144, Q225, T240, and R304 each bind IMP. H42 acts as the Proton donor in catalysis. A300 to R306 contacts substrate. Residues R306, K332–D334, and S415–G417 contribute to the GTP site.

This sequence belongs to the adenylosuccinate synthetase family. As to quaternary structure, homodimer. Mg(2+) serves as cofactor.

It is found in the cytoplasm. The enzyme catalyses IMP + L-aspartate + GTP = N(6)-(1,2-dicarboxyethyl)-AMP + GDP + phosphate + 2 H(+). Its pathway is purine metabolism; AMP biosynthesis via de novo pathway; AMP from IMP: step 1/2. In terms of biological role, plays an important role in the de novo pathway of purine nucleotide biosynthesis. Catalyzes the first committed step in the biosynthesis of AMP from IMP. This is Adenylosuccinate synthetase from Sodalis glossinidius (strain morsitans).